A 391-amino-acid polypeptide reads, in one-letter code: uncharacterized protein (391 aa).

The chain crosses the membrane as a helical span at residues 4-24 (FALIVGIVALAIFSFLYIQLY).

The protein resides in the membrane. This is an uncharacterized protein from Haemophilus influenzae (strain ATCC 51907 / DSM 11121 / KW20 / Rd).